We begin with the raw amino-acid sequence, 344 residues long: CRISPR-associated endonuclease Cas1 2 (344 aa).

3 residues coordinate Mn(2+): Glu167, His235, and Glu250.

It belongs to the CRISPR-associated endonuclease Cas1 family. In terms of assembly, homodimer, forms a heterotetramer with a Cas2 homodimer. Mg(2+) serves as cofactor. Requires Mn(2+) as cofactor.

Functionally, CRISPR (clustered regularly interspaced short palindromic repeat), is an adaptive immune system that provides protection against mobile genetic elements (viruses, transposable elements and conjugative plasmids). CRISPR clusters contain spacers, sequences complementary to antecedent mobile elements, and target invading nucleic acids. CRISPR clusters are transcribed and processed into CRISPR RNA (crRNA). Acts as a dsDNA endonuclease. Involved in the integration of spacer DNA into the CRISPR cassette. This Rhodospirillum rubrum (strain ATCC 11170 / ATH 1.1.1 / DSM 467 / LMG 4362 / NCIMB 8255 / S1) protein is CRISPR-associated endonuclease Cas1 2.